Reading from the N-terminus, the 227-residue chain is Phosphatidylserine decarboxylase proenzyme (227 aa).

Catalysis depends on S181, which acts as the Schiff-base intermediate with substrate; via pyruvic acid. S181 carries the pyruvic acid (Ser); by autocatalysis modification.

Belongs to the phosphatidylserine decarboxylase family. PSD-A subfamily. As to quaternary structure, heterodimer of a large membrane-associated beta subunit and a small pyruvoyl-containing alpha subunit. Pyruvate serves as cofactor. In terms of processing, is synthesized initially as an inactive proenzyme. Formation of the active enzyme involves a self-maturation process in which the active site pyruvoyl group is generated from an internal serine residue via an autocatalytic post-translational modification. Two non-identical subunits are generated from the proenzyme in this reaction, and the pyruvate is formed at the N-terminus of the alpha chain, which is derived from the carboxyl end of the proenzyme. The post-translation cleavage follows an unusual pathway, termed non-hydrolytic serinolysis, in which the side chain hydroxyl group of the serine supplies its oxygen atom to form the C-terminus of the beta chain, while the remainder of the serine residue undergoes an oxidative deamination to produce ammonia and the pyruvoyl prosthetic group on the alpha chain.

It localises to the cell membrane. The enzyme catalyses a 1,2-diacyl-sn-glycero-3-phospho-L-serine + H(+) = a 1,2-diacyl-sn-glycero-3-phosphoethanolamine + CO2. It participates in phospholipid metabolism; phosphatidylethanolamine biosynthesis; phosphatidylethanolamine from CDP-diacylglycerol: step 2/2. Functionally, catalyzes the formation of phosphatidylethanolamine (PtdEtn) from phosphatidylserine (PtdSer). This Anaplasma phagocytophilum (strain HZ) protein is Phosphatidylserine decarboxylase proenzyme.